The sequence spans 23 residues: uncharacterized protein (23 aa).

The protein resides in the plastid. The protein localises to the chloroplast. This is an uncharacterized protein from Zea mays (Maize).